The primary structure comprises 217 residues: Large ribosomal subunit protein uL4 (217 aa).

The disordered stretch occupies residues 58–90 (TAATKGRSDVSGGGKKPWRQKGTGRARSGTSRS).

It belongs to the universal ribosomal protein uL4 family. As to quaternary structure, part of the 50S ribosomal subunit.

One of the primary rRNA binding proteins, this protein initially binds near the 5'-end of the 23S rRNA. It is important during the early stages of 50S assembly. It makes multiple contacts with different domains of the 23S rRNA in the assembled 50S subunit and ribosome. Functionally, forms part of the polypeptide exit tunnel. The chain is Large ribosomal subunit protein uL4 from Syntrophus aciditrophicus (strain SB).